The sequence spans 243 residues: Carboxy-S-adenosyl-L-methionine synthase (243 aa).

Residues Y35, 68-70 (GCS), 92-93 (DN), and R199 contribute to the S-adenosyl-L-methionine site.

The protein belongs to the class I-like SAM-binding methyltransferase superfamily. Cx-SAM synthase family. In terms of assembly, homodimer.

It carries out the reaction prephenate + S-adenosyl-L-methionine = carboxy-S-adenosyl-L-methionine + 3-phenylpyruvate + H2O. Functionally, catalyzes the conversion of S-adenosyl-L-methionine (SAM) to carboxy-S-adenosyl-L-methionine (Cx-SAM). This is Carboxy-S-adenosyl-L-methionine synthase from Helicobacter pylori (strain P12).